The primary structure comprises 2549 residues: Serine/threonine-protein kinase mTOR (2549 aa).

At methionine 1 the chain carries N-acetylmethionine. An interaction with NBN region spans residues 1–651 (MLGTGPAAAT…HVVSQTAVQV (651 aa)). 32 HEAT repeats span residues 16–53 (SSNVSVLQQFASGLKSRNEETRAKAAKELQHYVTMELR), 55–99 (MSQE…VEGG), 100–137 (NATRIGRFANYLRNLLPSNDPVVMEMASKAIGRLAMAG), 138–179 (DTFT…AISV), 180–220 (PTFF…LILT), 222–276 (QREP…RISS), 277–313 (MEGERLREEMEEITQQQLVHDKYCKDLMGFGTKPRHI), 314–364 (TPFT…CCRD), 365–409 (LMEE…AFTD), 410–445 (TQYLQDTMNHVLSCVKKEKERTAAFQALGLLSVAVR), 446–494 (SEFK…RAMG), 495–529 (PGIQQDIKELLEPMLAVGLSPALTAVLYDLSRQIP), 530–563 (QLKKDIQDGLLKMLSLVLMHKPLRHPGMPKGLAH), 564–596 (QLASPGLTTLPEASDVGSITLALRTLGSFEFEG), 597–636 (HSLTQFVRHCADHFLNSEHKEIRMEAARTCSRLLTPSIHL), 637–683 (ISGH…DERF), 686–724 (HLAQAENLQALFVALNDQVFEIRELAICTVGRLSSMNPA), 727–766 (MPFLRKMLIQILTELEHSGIGRIKEQSARMLGHLVSNAPR), 769–811 (RPYM…VSGL), 814–853 (RKWVDELFIIIMDMLQDSSLLAKRQVALWTLGQLVASTGY), 857–893 (PYRKYPTLLEVLLNFLKTEQNQGTRREAIRVLGLLGA), 894–942 (LDPY…GNLP), 943–988 (LDEF…KCVQ), 989–1027 (FLPQVMPTFLNVIRVCDGAIREFLFQQLGMLVSFVKSHI), 1029–1068 (PYMDEIVTLMREFWVMNTSIQSTIILLIEQIVVALGGEFK), 1069–1105 (LYLPQLIPHMLRVFMHDNSPGRIVSIKLLAAIQLFGA), 1106–1144 (NLDDYLHLLLPPIVKLFDAPEAPLPSRKAALETVDRLTE), 1145–1188 (SLDF…GKKY), 1189–1225 (QIFIPMVNKVLVRHRINHQRYDVLICRIVKGYTLADE), 1226–1273 (EEDP…GAAR), 1274–1311 (RVSKDDWLEWLRRLSLELLKDSSSPSLRSCWALAQAYN), and 1312–1345 (PMARDLFNAAFVSCWSELNEDQQDELIRSIELAL). Residue serine 567 is modified to Phosphoserine. A Phosphothreonine modification is found at threonine 1162. An N6-acetyllysine modification is found at lysine 1218. Serine 1261 bears the Phosphoserine mark. TPR repeat units follow at residues 1346 to 1382 (TSQDIAEVTQTLLNLAEFMEHSDKGPLPLRDDNGIVL), 1383 to 1408 (LGERAAKCRAYAKALHYKELEFQKGP), 1409 to 1442 (TPAILESLISINNKLQQPEAAAGVLEYAMKHFGE), 1443 to 1473 (LEIQATWYEKLHEWEDALVAYDKKMDTNKDD), 1474 to 1507 (PELMLGRMRCLEALGEWGQLHQQCCEKWTLVNDE), 1508 to 1541 (TQAKMARMAAAAAWGLGQWDSMEEYTCMIPRDTH), 1542 to 1574 (DGAFYRAVLALHQDLFSLAQQCIDKARDLLDAE), 1575 to 1614 (LTAMAGESYSRAYGAMVSCHMLSELEEVIQYKLVPERREI), 1615 to 1649 (IRQIWWERLQGCQRIVEDWQKILMVRSLVVSPHED), 1650 to 1693 (MRTW…PTVH), 1694 to 1731 (PQVTYAYMKNMWKSARKIDAFQHMQHFVQTMQQQAQHA), 1732 to 1786 (IATE…DRSW), 1787 to 1846 (YKAW…STEG), 1898 to 1930 (NNLQDTLRVLTLWFDYGHWPDVNEALVEGVKAI), 1931 to 1970 (QIDTWLQVIPQLIARIDTPRPLVGRLIHQLLTDIGRYHPQ), and 1971 to 2005 (ALIYPLTVASKSTTTARHNAANKILKNMCEHSNTL). One can recognise an FAT domain in the interval 1382–1982 (LLGERAAKCR…IYPLTVASKS (601 aa)). Residues lysine 1662, lysine 1702, and arginine 1749 each contribute to the 1D-myo-inositol hexakisphosphate site. The disordered stretch occupies residues 1812 to 1867 (DEKKKLRHASGANITNATTAATTAATATTTASTEGSNSESEAESTENSPTPSPLQK). A compositionally biased stretch (low complexity) spans 1820–1860 (ASGANITNATTAATTAATATTTASTEGSNSESEAESTENSP). Positions 2012–2144 (VSEELIRVAI…DLELAVPGTY (133 aa)) are sufficient for interaction with the FKBP1A/rapamycin complex. Lysine 2066 participates in a covalent cross-link: Glycyl lysine isopeptide (Lys-Gly) (interchain with G-Cter in ubiquitin). Positions 2156–2469 (IAPSLQVITS…GVELGEPAHK (314 aa)) constitute a PI3K/PI4K catalytic domain. Residue serine 2159 is modified to Phosphoserine; by TBK1. Residues 2162–2168 (VITSKQR) form a G-loop region. Threonine 2164 is subject to Phosphothreonine. ATP is bound by residues serine 2165 and glutamine 2167. Phosphothreonine; by PKB/AKT1 is present on threonine 2173. Positions 2185, 2187, 2190, 2225, 2238, 2239, 2240, and 2245 each coordinate ATP. The interaction with MLST8 stretch occupies residues 2258 to 2296 (KILLNIEHRIMLRMAPDYDHLTLMQKVEVFEHAVNNTAG). Positions 2335–2343 (GLGDRHPSN) are catalytic loop. Residue asparagine 2343 participates in Mg(2+) binding. Positions 2345 and 2356 each coordinate ATP. Residues 2355-2380 (HIDFGDCFEVAMTREKFPEKIPFRLT) form an activation loop region. Aspartate 2357 contributes to the Mg(2+) binding site. The residue at position 2446 (threonine 2446) is a Phosphothreonine; by RPS6KB1. The residue at position 2448 (serine 2448) is a Phosphoserine; by RPS6KB1. Serine 2478 carries the phosphoserine modification. Phosphoserine; by autocatalysis is present on serine 2481. In terms of domain architecture, FATC spans 2517 to 2549 (DTLDVPTQVELLIKQATSHENLCQCYIGWCPFW).

It belongs to the PI3/PI4-kinase family. In terms of assembly, part of the mechanistic target of rapamycin complex 1 (mTORC1) which contains MTOR, MLST8 and RPTOR. The mTORC1 complex is a 1 Md obligate dimer of two stoichiometric heterotetramers with overall dimensions of 290 A x 210 A x 135 A. It has a rhomboid shape and a central cavity, the dimeric interfaces are formed by interlocking interactions between the two MTOR and the two RPTOR subunits. The MLST8 subunit forms distal foot-like protuberances, and contacts only one MTOR within the complex, while the small AKT1S1/PRAS40 localizes to the midsection of the central core, in close proximity to RPTOR. mTORC1 associates with AKT1S1/PRAS40, which inhibits its activity by blocking MTOR substrate-recruitment site. Component of the mechanistic target of rapamycin complex 2 (mTORC2), consisting in two heterotretramers composed of MTOR, MLST8, RICTOR and MAPKAP1/SIN1. Interacts with PLPP7 and PML. Interacts with PRR5 and RICTOR; the interaction is direct within the mTORC2 complex and interaction with RICTOR is enhanced by deubiquitination of RICTOR by USP9X. mTORC1 and mTORC2 associate with DEPTOR, which regulates their activity. Interacts with WAC; WAC positively regulates MTOR activity by promoting the assembly of the TTT complex composed of TELO2, TTI1 and TTI2 and the RUVBL complex composed of RUVBL1 and RUVBL2 into the TTT-RUVBL complex which leads to the dimerization of the mTORC1 complex and its subsequent activation. Interacts with UBQLN1. Interacts with TTI1 and TELO2. Interacts with CLIP1; phosphorylates and regulates CLIP1. Interacts with NBN. Interacts with HTR6. Interacts with BRAT1. Interacts with MEAK7 (via C-terminal domain); the interaction increases upon nutrient stimulation. Interacts with TM4SF5; the interaction is positively regulated by arginine and is negatively regulated by leucine. Interacts with GPR137B. Interacts with NCKAP1L. Interacts with TPCN1 and TPCN2; the interaction is required for TPCN1 and TPCN2 sensitivity to ATP. Interacts with ATP6V1A and with CRYAB, forming a ternary complex. Interacts with SLC38A7; this interaction mediates the recruitment of mTORC1 to the lysosome and its subsequent activation. Interacts with TSPAN8. Post-translationally, autophosphorylates when part of mTORC1 or mTORC2. Phosphorylation at Ser-1261, Ser-2159 and Thr-2164 promotes autophosphorylation. Phosphorylated at Ser-2448 by RPS6KB1. Phosphorylation in the kinase domain modulates the interactions of MTOR with RPTOR and AKT1S1/PRAS40 and leads to increased intrinsic mTORC1 kinase activity. Phosphorylation at Ser-2159 by TBK1 in response to growth factors and pathogen recognition receptors promotes mTORC1 activity. Phosphorylation at Ser-2159 by TBK1 in response to EGF growth factor promotes mTORC2 activity, leading to AKT1 phosphorylation and activation. Phosphorylation at Thr-2173 in the ATP-binding region by AKT1 strongly reduces kinase activity. Ubiquitinated at Lys-2066 by the SCF(FBXO22) complex via 'Lys-27'-linked ubiquitination prevents mTORC1 substrate recruitment. As to expression, expressed in numerous tissues, with highest levels in testis.

The protein localises to the lysosome membrane. It localises to the endoplasmic reticulum membrane. Its subcellular location is the golgi apparatus membrane. It is found in the cell membrane. The protein resides in the mitochondrion outer membrane. The protein localises to the cytoplasm. It localises to the nucleus. Its subcellular location is the PML body. It is found in the microsome membrane. The protein resides in the cytoplasmic vesicle. The protein localises to the phagosome. It carries out the reaction L-seryl-[protein] + ATP = O-phospho-L-seryl-[protein] + ADP + H(+). The enzyme catalyses L-threonyl-[protein] + ATP = O-phospho-L-threonyl-[protein] + ADP + H(+). The catalysed reaction is L-tyrosyl-[protein] + ATP = O-phospho-L-tyrosyl-[protein] + ADP + H(+). Its activity is regulated as follows. The mTORC1 complex is activated in response to nutrients, growth factors or amino acids: activation requires relocalization of the mTORC1 complex to lysosomes that is mediated by the Ragulator complex, SLC38A9, and the Rag GTPases RagA/RRAGA, RagB/RRAGB, RagC/RRAGC and RagD/RRAGD. Activation of mTORC1 by growth factors such as insulin involves AKT1-mediated phosphorylation of TSC1-TSC2, which leads to the activation of the RHEB GTPase a potent activator of the protein kinase activity of mTORC1. Insulin-stimulated and amino acid-dependent phosphorylation at Ser-1261 promotes autophosphorylation and the activation of mTORC1. On the other hand, low cellular energy levels can inhibit mTORC1 through activation of PRKAA1 while hypoxia inhibits mTORC1 through a REDD1-dependent mechanism which may also require PRKAA1. The kinase activity of MTOR within the mTORC1 complex is positively regulated by MLST8. The kinase activity of MTOR is inhibited by DEPTOR and AKT1S1. The non-canonical mTORC1 complex is independent of the RHEB GTPase and specifically mediates phosphorylation of MiT/TFE factors TFEB and TFE3 but not other mTORC1 substrates: it is activated by FLCN, which activates Rag GTPases RagC/RRAGC and RagD/RRAGD. MTOR is the target of the immunosuppressive and anti-cancer drug rapamycin which acts in complex with FKBP1A/FKBP12, and specifically inhibits its kinase activity. mTORC2 is also activated by growth factors, but seems to be nutrient-insensitive. mTORC2 associates and is directly activated by ribosomes. mTORC2 may also be regulated by RHEB but in an indirect manner through the PI3K signaling pathway. Its function is as follows. Serine/threonine protein kinase which is a central regulator of cellular metabolism, growth and survival in response to hormones, growth factors, nutrients, energy and stress signals. MTOR directly or indirectly regulates the phosphorylation of at least 800 proteins. Functions as part of 2 structurally and functionally distinct signaling complexes mTORC1 and mTORC2 (mTOR complex 1 and 2). In response to nutrients, growth factors or amino acids, mTORC1 is recruited to the lysosome membrane and promotes protein, lipid and nucleotide synthesis by phosphorylating key regulators of mRNA translation and ribosome synthesis. This includes phosphorylation of EIF4EBP1 and release of its inhibition toward the elongation initiation factor 4E (eiF4E). Moreover, phosphorylates and activates RPS6KB1 and RPS6KB2 that promote protein synthesis by modulating the activity of their downstream targets including ribosomal protein S6, eukaryotic translation initiation factor EIF4B, and the inhibitor of translation initiation PDCD4. Stimulates the pyrimidine biosynthesis pathway, both by acute regulation through RPS6KB1-mediated phosphorylation of the biosynthetic enzyme CAD, and delayed regulation, through transcriptional enhancement of the pentose phosphate pathway which produces 5-phosphoribosyl-1-pyrophosphate (PRPP), an allosteric activator of CAD at a later step in synthesis, this function is dependent on the mTORC1 complex. Regulates ribosome synthesis by activating RNA polymerase III-dependent transcription through phosphorylation and inhibition of MAF1 an RNA polymerase III-repressor. Activates dormant ribosomes by mediating phosphorylation of SERBP1, leading to SERBP1 inactivation and reactivation of translation. In parallel to protein synthesis, also regulates lipid synthesis through SREBF1/SREBP1 and LPIN1. To maintain energy homeostasis mTORC1 may also regulate mitochondrial biogenesis through regulation of PPARGC1A. In the same time, mTORC1 inhibits catabolic pathways: negatively regulates autophagy through phosphorylation of ULK1. Under nutrient sufficiency, phosphorylates ULK1 at 'Ser-758', disrupting the interaction with AMPK and preventing activation of ULK1. Also prevents autophagy through phosphorylation of the autophagy inhibitor DAP. Also prevents autophagy by phosphorylating RUBCNL/Pacer under nutrient-rich conditions. Prevents autophagy by mediating phosphorylation of AMBRA1, thereby inhibiting AMBRA1 ability to mediate ubiquitination of ULK1 and interaction between AMBRA1 and PPP2CA. mTORC1 exerts a feedback control on upstream growth factor signaling that includes phosphorylation and activation of GRB10 a INSR-dependent signaling suppressor. Among other potential targets mTORC1 may phosphorylate CLIP1 and regulate microtubules. The mTORC1 complex is inhibited in response to starvation and amino acid depletion. The non-canonical mTORC1 complex, which acts independently of RHEB, specifically mediates phosphorylation of MiT/TFE factors MITF, TFEB and TFE3 in the presence of nutrients, promoting their cytosolic retention and inactivation. Upon starvation or lysosomal stress, inhibition of mTORC1 induces dephosphorylation and nuclear translocation of TFEB and TFE3, promoting their transcription factor activity. The mTORC1 complex regulates pyroptosis in macrophages by promoting GSDMD oligomerization. MTOR phosphorylates RPTOR which in turn inhibits mTORC1. As part of the mTORC2 complex, MTOR transduces signals from growth factors to pathways involved in proliferation, cytoskeletal organization, lipogenesis and anabolic output. In response to growth factors, mTORC2 phosphorylates and activates AGC protein kinase family members, including AKT (AKT1, AKT2 and AKT3), PKC (PRKCA, PRKCB and PRKCE) and SGK1. In contrast to mTORC1, mTORC2 is nutrient-insensitive. mTORC2 plays a critical role in AKT1 activation by mediating phosphorylation of different sites depending on the context, such as 'Thr-450', 'Ser-473', 'Ser-477' or 'Thr-479', facilitating the phosphorylation of the activation loop of AKT1 on 'Thr-308' by PDPK1/PDK1 which is a prerequisite for full activation. mTORC2 also regulates the phosphorylation of SGK1 at 'Ser-422'. mTORC2 may regulate the actin cytoskeleton, through phosphorylation of PRKCA, PXN and activation of the Rho-type guanine nucleotide exchange factors RHOA and RAC1A or RAC1B. The mTORC2 complex also phosphorylates various proteins involved in insulin signaling, such as FBXW8 and IGF2BP1. May also regulate insulin signaling by acting as a tyrosine protein kinase that catalyzes phosphorylation of IGF1R and INSR; additional evidence are however required to confirm this result in vivo. Regulates osteoclastogenesis by adjusting the expression of CEBPB isoforms. Plays an important regulatory role in the circadian clock function; regulates period length and rhythm amplitude of the suprachiasmatic nucleus (SCN) and liver clocks. The sequence is that of Serine/threonine-protein kinase mTOR from Homo sapiens (Human).